The sequence spans 538 residues: Bifunctional purine biosynthesis protein PurH (538 aa).

In terms of domain architecture, MGS-like spans 8–158 (IPAPDKVEIK…KNHAYVTTLT (151 aa)).

Belongs to the PurH family.

The enzyme catalyses (6R)-10-formyltetrahydrofolate + 5-amino-1-(5-phospho-beta-D-ribosyl)imidazole-4-carboxamide = 5-formamido-1-(5-phospho-D-ribosyl)imidazole-4-carboxamide + (6S)-5,6,7,8-tetrahydrofolate. It carries out the reaction IMP + H2O = 5-formamido-1-(5-phospho-D-ribosyl)imidazole-4-carboxamide. It participates in purine metabolism; IMP biosynthesis via de novo pathway; 5-formamido-1-(5-phospho-D-ribosyl)imidazole-4-carboxamide from 5-amino-1-(5-phospho-D-ribosyl)imidazole-4-carboxamide (10-formyl THF route): step 1/1. The protein operates within purine metabolism; IMP biosynthesis via de novo pathway; IMP from 5-formamido-1-(5-phospho-D-ribosyl)imidazole-4-carboxamide: step 1/1. This is Bifunctional purine biosynthesis protein PurH from Rhizobium johnstonii (strain DSM 114642 / LMG 32736 / 3841) (Rhizobium leguminosarum bv. viciae).